We begin with the raw amino-acid sequence, 141 residues long: Large ribosomal subunit protein uL11 (141 aa).

Belongs to the universal ribosomal protein uL11 family. Part of the ribosomal stalk of the 50S ribosomal subunit. Interacts with L10 and the large rRNA to form the base of the stalk. L10 forms an elongated spine to which L12 dimers bind in a sequential fashion forming a multimeric L10(L12)X complex. In terms of processing, one or more lysine residues are methylated.

Its function is as follows. Forms part of the ribosomal stalk which helps the ribosome interact with GTP-bound translation factors. The sequence is that of Large ribosomal subunit protein uL11 from Helicobacter acinonychis (strain Sheeba).